A 183-amino-acid chain; its full sequence is Myelin-associated oligodendrocyte basic protein (183 aa).

Residues 68-183 are disordered; sequence TRTSRRAKSP…GSPVKASRFW (116 aa). A compositionally biased stretch (basic residues) spans 69 to 78; the sequence is RTSRRAKSPQ. Residues 79–96 show a composition bias toward low complexity; sequence RPKQQPAAPPAVVRAPAK. 4 tandem repeats follow at residues 97–106, 107–116, 117–126, and 127–136. The 4 X 10 AA tandem repeats of P-R-S-P-P-R-S-E-R-Q stretch occupies residues 97 to 136; that stretch reads PRSPPRSERQPRSPPRSERQPRSPPRSERQPRSPPRSERQ. Phosphoserine is present on residues S99 and S109. Residues 101–143 show a composition bias toward basic and acidic residues; the sequence is PRSERQPRSPPRSERQPRSPPRSERQPRSPPRSERQPRPRPEV. A compositionally biased stretch (low complexity) spans 151 to 164; that stretch reads RPPQKSKQQPRSSP.

It localises to the cytoplasm. The protein resides in the perinuclear region. In terms of biological role, may play a role in compacting or stabilizing the myelin sheath, possibly by binding the negatively charged acidic phospholipids of the cytoplasmic membrane. This chain is Myelin-associated oligodendrocyte basic protein (MOBP), found in Homo sapiens (Human).